Consider the following 131-residue polypeptide: Small ribosomal subunit protein uS8 (131 aa).

The protein belongs to the universal ribosomal protein uS8 family. Part of the 30S ribosomal subunit. Contacts proteins S5 and S12.

Its function is as follows. One of the primary rRNA binding proteins, it binds directly to 16S rRNA central domain where it helps coordinate assembly of the platform of the 30S subunit. In Hydrogenovibrio crunogenus (strain DSM 25203 / XCL-2) (Thiomicrospira crunogena), this protein is Small ribosomal subunit protein uS8.